Consider the following 135-residue polypeptide: Endoribonuclease YbeY (135 aa).

The Zn(2+) site is built by histidine 102, histidine 106, and histidine 112.

The protein belongs to the endoribonuclease YbeY family. It depends on Zn(2+) as a cofactor.

The protein localises to the cytoplasm. Functionally, single strand-specific metallo-endoribonuclease involved in late-stage 70S ribosome quality control and in maturation of the 3' terminus of the 16S rRNA. The chain is Endoribonuclease YbeY from Rubrobacter xylanophilus (strain DSM 9941 / JCM 11954 / NBRC 16129 / PRD-1).